A 164-amino-acid polypeptide reads, in one-letter code: MVTFHTNHGDIVIKTFDDKAPETVKNFLDYCREGFYNNTIFHRVINGFMIQGGGFEPGMKQKATKEPIKNEANNGLKNTRGTLAMARTQAPHSATAQFFINVVDNDFLNFSGESLQGWGYCVFAEVVDGMDVVDKIKGVATGRSGMHQDVPKEDVIIESVTVSE.

The 162-residue stretch at 1-162 folds into the PPIase cyclophilin-type domain; it reads MVTFHTNHGD…EDVIIESVTV (162 aa).

The protein belongs to the cyclophilin-type PPIase family.

The protein localises to the cytoplasm. It catalyses the reaction [protein]-peptidylproline (omega=180) = [protein]-peptidylproline (omega=0). Inhibition by cyclosporin A with a Ki of 25 to 50 mu-mol, a concentration 1000-fold higher than that required for eukaryotic PPIases. PPIases accelerate the folding of proteins. It catalyzes the cis-trans isomerization of proline imidic peptide bonds in oligopeptides. The protein is Peptidyl-prolyl cis-trans isomerase B (ppiB) of Escherichia coli (strain K12).